The sequence spans 912 residues: WD repeat-containing protein 44 (912 aa).

Positions 1–14 (MASESDTEEFFDAP) are enriched in acidic residues. A disordered region spans residues 1 to 25 (MASESDTEEFFDAPEDVHLEGGDPI). The residue at position 2 (alanine 2) is an N-acetylalanine. The interval 2-170 (ASESDTEEFF…SSTAQLNVPE (169 aa)) is binding activity. Residue serine 3 is modified to Phosphoserine. The short motif at 9 to 15 (EFFDAPE) is the FFAT-like motif element. Phosphoserine occurs at positions 50, 66, 71, 81, 96, and 126. 2 disordered regions span residues 79–104 (DDSL…GTEL) and 118–152 (QEDS…KPVD). A compositionally biased stretch (polar residues) spans 89 to 104 (QSDQATASPVTAGTEL). Threonine 158 is subject to Phosphothreonine. 5 disordered regions span residues 183–202 (VKES…TKDF), 207–279 (EVAP…PKEN), 318–349 (QENG…ELTD), 396–422 (SNDA…RLKQ), and 457–479 (RDEV…MPYT). The important for interaction with ARHGAP26 AND ARHGAP10 stretch occupies residues 210-256 (PAKPPRQLTPEPDIVASTKKPVPARPPPPANFPPPRPPPPSRPAPPP). Residue threonine 218 is modified to Phosphothreonine. A compositionally biased stretch (pro residues) spans 232-255 (PARPPPPANFPPPRPPPPSRPAPP). At serine 261 the chain carries Phosphoserine. Residues 261–277 (SELEFEALKTPDLDVPK) show a composition bias toward basic and acidic residues. Phosphothreonine is present on threonine 270. The important for interaction with RAB11A stretch occupies residues 333 to 346 (VMGPQRPRSNSGRE). The tract at residues 334-504 (MGPQRPRSNS…DFDQIKVVQD (171 aa)) is interaction with RAB11. Residues serine 341 and serine 343 each carry the phosphoserine modification. Threonine 348 is subject to Phosphothreonine. Serine 402, serine 469, serine 470, and serine 471 each carry phosphoserine. Residues 466–475 (DDPSSSDDEG) show a composition bias toward acidic residues. Phosphotyrosine is present on tyrosine 478. One copy of the WD 1 repeat lies at 508–547 (EHMGAVWTMKFSHCGRLLASAGQDNVVRIWALKNAFDYFN). Positions 556 to 592 (EGRVSPSPSQESLNSSKSDTDTGVCSGTDEDPDDKNA) are disordered. 2 positions are modified to phosphoserine: serine 560 and serine 564. Residues 560-572 (SPSPSQESLNSSK) show a composition bias toward low complexity. WD repeat units lie at residues 604–642 (GHTA…CLCC), 644–684 (QHID…VALW), 689–728 (GQTK…YHTQ), 739–778 (KVGR…LSMK), 783–822 (VNSS…SKFT), and 871–912 (EDAE…KNLS).

In terms of assembly, interacts with the GTP-bound form of RAB11A when membrane-associated. Interacts with GRAF1/ARHGAP26 or GRAF2/ARHGAP10; the interaction connects the endoplasmic reticulum (ER) with the endosomal tubule. Interacts (via FFAT-like motif) with VAPA (via MSP domain) or VAPB (via MSP domain); the interaction connects the ER with the endosomal tubule. Does not bind to other Rab and Rho small G proteins. In terms of processing, phosphorylated by ATK1; the phosphorylation stabilizes its interaction with RAB11A and RAB11B. Highly expressed in brain.

It is found in the cytoplasm. It localises to the cytosol. Its subcellular location is the perinuclear region. The protein resides in the endosome membrane. The protein localises to the golgi apparatus. It is found in the trans-Golgi network. In terms of biological role, downstream effector for Rab11 which regulates Rab11 intracellular membrane trafficking functions such as endocytic recycling, intracellular ciliogenesis and protein export. ATK1-mediated phosphorylation of WDR44 induces binding to Rab11 which activates endocytic recycling of transferrin receptor back to the plasma membrane. When bound to Rab11, prevents the formation of the ciliogenic Rab11-Rabin8/RAB3IP-RAB11FIP3 complex, therefore inhibiting preciliary trafficking and ciliogenesis. Participates in neo-synthesized protein export by connecting the endoplasmic reticulum (ER) with the endosomal tubule via direct interactions with the integral ER proteins VAPA or VAPB and the endosomal protein GRAFs (GRAF1/ARHGAP26 or GRAF2/ARHGAP10), which facilitates the transfer of proteins such as E-cadherin, MPP14 and CFTR into a Rab8-Rab10-Rab11-dependent export route. In Bos taurus (Bovine), this protein is WD repeat-containing protein 44 (WDR44).